Reading from the N-terminus, the 90-residue chain is C-C motif chemokine 4 homolog (90 aa).

The signal sequence occupies residues 1-21 (MKVSVAALAVLLIAICYQTSA). Disulfide bonds link Cys-32–Cys-56 and Cys-33–Cys-72.

It belongs to the intercrine beta (chemokine CC) family. Homodimer.

The protein localises to the secreted. In terms of biological role, monokine with inflammatory and chemokinetic properties. In Gallus gallus (Chicken), this protein is C-C motif chemokine 4 homolog (CCL4).